A 70-amino-acid polypeptide reads, in one-letter code: uncharacterized protein (70 aa).

The helical transmembrane segment at C14 to I34 threads the bilayer.

The protein localises to the virion membrane. This is an uncharacterized protein from Homo sapiens (Human).